The primary structure comprises 247 residues: Aliphatic sulfonates import ATP-binding protein SsuB 1 (247 aa).

The 216-residue stretch at 7–222 (LSLSGVHKSF…KRSSYEFVET (216 aa)) folds into the ABC transporter domain. Residue 39 to 46 (GKSGCGKS) coordinates ATP.

It belongs to the ABC transporter superfamily. Aliphatic sulfonates importer (TC 3.A.1.17.2) family. The complex is composed of two ATP-binding proteins (SsuB), two transmembrane proteins (SsuC) and a solute-binding protein (SsuA).

The protein resides in the cell membrane. The enzyme catalyses ATP + H2O + aliphatic sulfonate-[sulfonate-binding protein]Side 1 = ADP + phosphate + aliphatic sulfonateSide 2 + [sulfonate-binding protein]Side 1.. Functionally, part of the ABC transporter complex SsuABC involved in aliphatic sulfonates import. Responsible for energy coupling to the transport system. This Shouchella clausii (strain KSM-K16) (Alkalihalobacillus clausii) protein is Aliphatic sulfonates import ATP-binding protein SsuB 1.